A 549-amino-acid polypeptide reads, in one-letter code: Glucose-6-phosphate isomerase (549 aa).

The active-site Proton donor is E355. Residues H386 and K514 contribute to the active site.

It belongs to the GPI family.

The protein localises to the cytoplasm. It catalyses the reaction alpha-D-glucose 6-phosphate = beta-D-fructose 6-phosphate. Its pathway is carbohydrate biosynthesis; gluconeogenesis. It functions in the pathway carbohydrate degradation; glycolysis; D-glyceraldehyde 3-phosphate and glycerone phosphate from D-glucose: step 2/4. In terms of biological role, catalyzes the reversible isomerization of glucose-6-phosphate to fructose-6-phosphate. In Salmonella arizonae (strain ATCC BAA-731 / CDC346-86 / RSK2980), this protein is Glucose-6-phosphate isomerase.